Consider the following 415-residue polypeptide: Histidine--tRNA ligase (415 aa).

Belongs to the class-II aminoacyl-tRNA synthetase family. Homodimer.

The protein resides in the cytoplasm. It catalyses the reaction tRNA(His) + L-histidine + ATP = L-histidyl-tRNA(His) + AMP + diphosphate + H(+). The protein is Histidine--tRNA ligase of Rickettsia canadensis (strain McKiel).